Reading from the N-terminus, the 106-residue chain is Thiosulfate sulfurtransferase GlpE (106 aa).

In terms of domain architecture, Rhodanese spans 17–105 (EQGEAKLVDI…WQRAQLPIVR (89 aa)). Cysteine 65 functions as the Cysteine persulfide intermediate in the catalytic mechanism.

It belongs to the GlpE family.

It localises to the cytoplasm. It catalyses the reaction thiosulfate + hydrogen cyanide = thiocyanate + sulfite + 2 H(+). The catalysed reaction is thiosulfate + [thioredoxin]-dithiol = [thioredoxin]-disulfide + hydrogen sulfide + sulfite + 2 H(+). In terms of biological role, transferase that catalyzes the transfer of sulfur from thiosulfate to thiophilic acceptors such as cyanide or dithiols. May function in a CysM-independent thiosulfate assimilation pathway by catalyzing the conversion of thiosulfate to sulfite, which can then be used for L-cysteine biosynthesis. The polypeptide is Thiosulfate sulfurtransferase GlpE (Vibrio parahaemolyticus serotype O3:K6 (strain RIMD 2210633)).